The chain runs to 242 residues: Proteasome subunit alpha (242 aa).

It belongs to the peptidase T1A family. In terms of assembly, the 20S proteasome core is composed of 14 alpha and 14 beta subunits that assemble into four stacked heptameric rings, resulting in a barrel-shaped structure. The two inner rings, each composed of seven catalytic beta subunits, are sandwiched by two outer rings, each composed of seven alpha subunits. The catalytic chamber with the active sites is on the inside of the barrel. Has a gated structure, the ends of the cylinder being occluded by the N-termini of the alpha-subunits. Is capped at one or both ends by the proteasome regulatory ATPase, PAN.

It is found in the cytoplasm. The formation of the proteasomal ATPase PAN-20S proteasome complex, via the docking of the C-termini of PAN into the intersubunit pockets in the alpha-rings, triggers opening of the gate for substrate entry. Interconversion between the open-gate and close-gate conformations leads to a dynamic regulation of the 20S proteasome proteolysis activity. In terms of biological role, component of the proteasome core, a large protease complex with broad specificity involved in protein degradation. This chain is Proteasome subunit alpha, found in Sulfolobus acidocaldarius (strain ATCC 33909 / DSM 639 / JCM 8929 / NBRC 15157 / NCIMB 11770).